Consider the following 457-residue polypeptide: BAG family molecular chaperone regulator 4 (457 aa).

The segment at 1 to 101 is disordered; sequence MSALRRSGYG…QPPYPSYNSN (101 aa). Phosphoserine is present on Ser-7. Over residues 8–20 the composition is skewed to low complexity; it reads GYGPSDGPSYGRY. Positions 30–47 are enriched in pro residues; it reads VHPPPPLYPLRPEPPQPP. Omega-N-methylarginine occurs at positions 40, 53, and 108. Disordered regions lie at residues 113–136, 166–333, and 347–377; these read YPST…NGAY, STEV…DDSD, and LYGN…ESTP. The segment covering 166–182 has biased composition (polar residues); the sequence is STEVPSTYRSSGNSPTP. Residue Arg-185 is modified to Omega-N-methylarginine. Composition is skewed to low complexity over residues 274–284 and 294–308; these read STSPWPSSGSP and QPKD…SDQS. Composition is skewed to polar residues over residues 320–333 and 347–365; these read QYES…DDSD and LYGN…SSSL. The BAG domain occupies 379–456; sequence SIKKIIHVLE…AILEKLEKKG (78 aa).

In terms of assembly, binds to the ATPase domain of HSP/HSC70 chaperones. Binds to the death domain of TNFRSF1A in the absence of TNF and thereby prevents binding of adapter molecules such as TRADD or TRAF2. Binds to the death domain of TNFRSF12. Interacts with PRKN. In terms of tissue distribution, ubiquitous.

It localises to the cytoplasm. Its function is as follows. Inhibits the chaperone activity of HSP70/HSC70 by promoting substrate release. Prevents constitutive TNFRSF1A signaling. Negative regulator of PRKN translocation to damaged mitochondria. The sequence is that of BAG family molecular chaperone regulator 4 (BAG4) from Homo sapiens (Human).